The chain runs to 389 residues: MTDRNPRTAEASGLYTYSSRPRAVACQRRRHRDSILQPVEEPMSYGNIMYDRRVIRGNTYALPTGQVPGQPDPLELQRQQQARRRALARKRAQEQLKPRTPEPVEGRKHVDIQTELYLEEIADRIVEVDMECQTDAFLDRPPTPLFIPAKTGKDVATQILGGELFDFDLEVKPMLEVLVGKTIEQSLLEVMEEEELANLRARQYAYEEIRNVELAEVQRLEEQERRHREEKERRKKQQWEIVHKRNETLQKISALIFARQYLANLLPSVFDKLRNSGFFYDPIERDIEVGFLPWLMNEVEKSMEHSMVGRTVLDMLIRDVVERRINDYEHKEAMPPGQKTNVINGPNTVTDPSVTTLHTQKPVLDRVSSQPAPSQERKPVEEGGHLMAE.

The disordered stretch occupies residues 63-106; that stretch reads PTGQVPGQPDPLELQRQQQARRRALARKRAQEQLKPRTPEPVEG. Residues 81-90 are compositionally biased toward basic residues; the sequence is QARRRALARK. Basic and acidic residues predominate over residues 91–106; the sequence is RAQEQLKPRTPEPVEG. Thr143 bears the Phosphothreonine; by MAPK1 mark. The stretch at 206–242 forms a coiled coil; that stretch reads YEEIRNVELAEVQRLEEQERRHREEKERRKKQQWEIV. The tract at residues 332–389 is disordered; the sequence is EAMPPGQKTNVINGPNTVTDPSVTTLHTQKPVLDRVSSQPAPSQERKPVEEGGHLMAE. Polar residues predominate over residues 338 to 359; sequence QKTNVINGPNTVTDPSVTTLHT. Basic and acidic residues predominate over residues 375 to 389; sequence QERKPVEEGGHLMAE.

It belongs to the flagellar radial spoke RSP3 family. Component of the axonemal radial spoke 1 (RS1) and 2 (RS2) complexes, at least composed of spoke head proteins RSPH1, RSPH3B, RSPH9 and the cilia-specific component RSPH4A or sperm-specific component RSPH6A, spoke stalk proteins RSPH14, DNAJB13, DYDC1, ROPN1L and NME5, and the RS1 complex-specific anchor protein IQUB. Interacts with IQUB. Interacts with phosphorylated MAPK1. Interacts with MEK1. Interacts with PKA regulatory subunits PRKAR1A and PRKAR1B. Interacts with RSPH1. Interacts with RSPH4A. Interacts with RSPH6A. Interacts with RSPH9. Interacts with LRRC23. As to expression, expressed in ependymal cells (at protein level).

The protein localises to the cytoplasm. Its subcellular location is the cytoskeleton. It localises to the cilium axoneme. It is found in the flagellum axoneme. Functions as part of axonemal radial spoke complexes that play an important part in the motility of sperm and cilia. Functions as a protein kinase A-anchoring protein that scaffolds the cAMP-dependent protein kinase holoenzyme. May serve as a point of convergence for MAPK and PKA signaling in cilia. In Mus musculus (Mouse), this protein is Radial spoke head protein 3 homolog B (Rsph3b).